The following is a 936-amino-acid chain: Sine oculis-binding protein homolog A (936 aa).

Positions 1–14 (MAEMEKEGRPPESK) are enriched in basic and acidic residues. Disordered regions lie at residues 1-46 (MAEM…GQAG) and 108-151 (ASTL…HGGL). Residues 108–144 (ASTLENSSGSPPHANSSGSTPTSRNGVTAESSVNPSS) show a composition bias toward polar residues. FCS-type zinc fingers lie at residues 169-207 (EDSS…KCFA) and 247-287 (LKTN…KCLN). Disordered regions lie at residues 311 to 330 (LPTS…LTPE), 336 to 424 (LSEL…VMTP), 486 to 511 (SPHL…HPAA), 574 to 632 (NPQR…KQTE), 697 to 727 (PPPA…DTYS), and 842 to 877 (DSAG…EDHA). Positions 349–382 (GATIAGPSGSTSGSPSEAGTVCSSSSSSSSSSSS) are enriched in low complexity. Residues 395–404 (SLPPPHPPPI) are compositionally biased toward pro residues. 3 stretches are compositionally biased toward polar residues: residues 617-632 (PPNS…KQTE), 708-717 (DGSTSISTGT), and 850-859 (NDQSAITTGT).

It belongs to the SOBP family.

Its function is as follows. Implicated in development of the cochlea. The sequence is that of Sine oculis-binding protein homolog A (sobpa) from Danio rerio (Zebrafish).